The following is a 283-amino-acid chain: Cyclin-C (283 aa).

The Cyclin N-terminal domain maps to 46 to 144 (NVIQALGEHL…ILECEFYLLE (99 aa)). The interval 252–283 (TILSKMPKPKPPPNSEGEQGPNGSQNSSYSQS) is disordered. Positions 272 to 283 (PNGSQNSSYSQS) are enriched in polar residues. At Ser-275 the chain carries Phosphoserine.

The protein belongs to the cyclin family. Cyclin C subfamily. In terms of assembly, component of the Mediator complex, which is composed of MED1, MED4, MED6, MED7, MED8, MED9, MED10, MED11, MED12, MED13, MED13L, MED14, MED15, MED16, MED17, MED18, MED19, MED20, MED21, MED22, MED23, MED24, MED25, MED26, MED27, MED29, MED30, MED31, CCNC, CDK8 and CDC2L6/CDK11. The MED12, MED13, CCNC and CDK8 subunits form a distinct module termed the CDK8 module. Mediator containing the CDK8 module is less active than Mediator lacking this module in supporting transcriptional activation. Individual preparations of the Mediator complex lacking one or more distinct subunits have been variously termed ARC, CRSP, DRIP, PC2, SMCC and TRAP. The cylin/CDK pair formed by CCNC/CDK8 also associates with the large subunit of RNA polymerase II. As to expression, highest levels in pancreas. High levels in heart, liver, skeletal muscle and kidney. Low levels in brain.

The protein resides in the nucleus. Its function is as follows. Component of the Mediator complex, a coactivator involved in regulated gene transcription of nearly all RNA polymerase II-dependent genes. Mediator functions as a bridge to convey information from gene-specific regulatory proteins to the basal RNA polymerase II transcription machinery. Mediator is recruited to promoters by direct interactions with regulatory proteins and serves as a scaffold for the assembly of a functional preinitiation complex with RNA polymerase II and the general transcription factors. Binds to and activates cyclin-dependent kinase CDK8 that phosphorylates the CTD (C-terminal domain) of the large subunit of RNA polymerase II (RNAp II), which may inhibit the formation of a transcription initiation complex. The chain is Cyclin-C (CCNC) from Homo sapiens (Human).